A 198-amino-acid chain; its full sequence is MAALTAEHFVALQSLLKASSKDVVRQLCQESFSSSCLDSESLLDKTCSSLSVPQGEAAQLLQALHHFTRLVAFRDLSSAEAILALFPENFHQNLKNLLTKIIVEHISTWRAEAQANQISLPRLVDLDWRVDIKTSSDNISRMAVPTCLLQMKIQEDPSLCGEKPSISAVTMELSKETLDTMLDGLGRIRDQLSAVANK.

N-acetylalanine is present on Ala-2. The COMM domain occupies 122–196 (RLVDLDWRVD…RIRDQLSAVA (75 aa)).

Belongs to the COMM domain-containing protein 9 family. Component of the commander complex consisting of the CCC subcomplex and the retriever subcomplex. Component of the CCC (COMMD/CCDC22/CCDC93) subcomplex consisting of COMMD1, COMMD2, COMMD3, COMMD4, COMMD5, COMMD6, COMMD7, COMMD8, COMMD9, COMMD10, CCDC22 and CCDC93; within the complex forms a heterodimer with COMMD7. Interacts with RELB and NFKB1/p105. Interacts with CCDC22, CCDC93, SCNN1B, CUL1.

It localises to the nucleus. The protein resides in the cytoplasmic vesicle. Functionally, scaffold protein in the commander complex that is essential for endosomal recycling of transmembrane cargos; the commander complex is composed of the CCC subcomplex and the retriever subcomplex. May modulate activity of cullin-RING E3 ubiquitin ligase (CRL) complexes. May down-regulate activation of NF-kappa-B. Modulates Na(+) transport in epithelial cells by regulation of apical cell surface expression of amiloride-sensitive sodium channel (ENaC) subunits. In Mus musculus (Mouse), this protein is COMM domain-containing protein 9 (Commd9).